The primary structure comprises 725 residues: Beta-adducin (725 aa).

The segment at 1 to 22 (MSEDTVPEAASPPPSQGQHYFD) is disordered. 2 positions are modified to phosphoserine: S11 and S25. T55 carries the post-translational modification Phosphothreonine. Phosphoserine is present on residues S60 and S344. Positions 425-444 (KQQKEKTRWLNTPNTYLRVN) are interaction with calmodulin. The tract at residues 525 to 725 (AEKSRSPSTE…KSKKKEKVES (201 aa)) is disordered. 2 positions are modified to phosphoserine: S530 and S532. A Phosphothreonine modification is found at T533. S535 is modified (phosphoserine). T561 carries the post-translational modification Phosphothreonine. The span at 566–589 (EEYKKEVERKKLEQEQEGEKDIAT) shows a compositional bias: basic and acidic residues. 4 positions are modified to phosphoserine: S594, S598, S602, and S606. Positions 596-621 (VKSTPASPVQSPSKAGTKSPAVSPSK) are enriched in polar residues. T612 carries the post-translational modification Phosphothreonine. Phosphoserine is present on residues S614, S618, and S620. Basic and acidic residues predominate over residues 622–631 (TSEDTKKTEV). T674 bears the Phosphothreonine mark. 9 positions are modified to phosphoserine: S678, S685, S688, S692, S696, S698, S700, S702, and S712. Low complexity predominate over residues 687–700 (TSGPLSPEGSPSKS). The span at 701–725 (PSKKKKKFRTPSFLKKSKKKEKVES) shows a compositional bias: basic residues. An interaction with calmodulin region spans residues 703–720 (KKKKKFRTPSFLKKSKKK).

This sequence belongs to the aldolase class II family. Adducin subfamily. Found in a complex with ADD2, DMTN and SLC2A1. Interacts with SLC2A1. Heterodimer of an alpha and a beta subunit.

It localises to the cytoplasm. It is found in the cytoskeleton. The protein resides in the cell membrane. Functionally, membrane-cytoskeleton-associated protein that promotes the assembly of the spectrin-actin network. Binds to the erythrocyte membrane receptor SLC2A1/GLUT1 and may therefore provide a link between the spectrin cytoskeleton to the plasma membrane. Binds to calmodulin. Calmodulin binds preferentially to the beta subunit. In Mus musculus (Mouse), this protein is Beta-adducin (Add2).